Here is a 461-residue protein sequence, read N- to C-terminus: Lysosomal dipeptide transporter MFSD1 (461 aa).

Over residues Met-1 to Gly-13 the composition is skewed to basic and acidic residues. Residues Met-1–Lys-22 are disordered. Residues Leu-10–Leu-11 carry the Dileucine internalization motif motif. The next 10 helical transmembrane spans lie at Leu-37 to Cys-57, Gln-81 to Leu-101, Thr-111 to Ala-131, Phe-134 to Ala-154, Leu-264 to Leu-284, Ala-302 to Val-322, Trp-331 to Trp-351, Leu-359 to Val-379, Phe-390 to Leu-410, and Leu-416 to Leu-436.

The protein belongs to the major facilitator superfamily. As to quaternary structure, homodimer. Interacts with lysosomal protein GLMP (via lumenal domain); the interaction starts while both proteins are still in the endoplasmic reticulum and is required for stabilization of MFSD1 in lysosomes but has no direct effect on its targeting to lysosomes or transporter activity.

The protein localises to the lysosome membrane. It catalyses the reaction L-alpha-aminoacyl-L-arginine(out) = L-alpha-aminoacyl-L-arginine(in). It carries out the reaction L-arginyl-L-alpha-amino acid(out) = L-arginyl-L-alpha-amino acid(in). The catalysed reaction is L-arginyl-glycine(out) = L-arginyl-glycine(in). The enzyme catalyses L-alpha-aminoacyl-L-lysine(out) = L-alpha-aminoacyl-L-lysine(in). It catalyses the reaction L-aspartyl-L-lysine(out) = L-aspartyl-L-lysine(in). It carries out the reaction L-alanyl-L-lysine(out) = L-alanyl-L-lysine(in). The catalysed reaction is L-lysyl-L-alpha-amino acid(out) = L-lysyl-L-alpha-amino acid(in). The enzyme catalyses L-lysyl-L-alanine(out) = L-lysyl-L-alanine(in). It catalyses the reaction L-lysyl-L-lysine(out) = L-lysyl-L-lysine(in). It carries out the reaction L-lysyl-glycine(out) = L-lysyl-glycine(in). The catalysed reaction is L-alpha-aminoacyl-L-histidine(out) = L-alpha-aminoacyl-L-histidine(in). The enzyme catalyses L-histidyl-L-alpha-amino acid(out) = L-histidyl-L-alpha-amino acid(in). It catalyses the reaction L-histidyl-glycine(out) = L-histidyl-glycine(in). Its function is as follows. Lysosomal dipeptide uniporter that selectively exports lysine, arginine or histidine-containing dipeptides with a net positive charge from the lysosome lumen into the cytosol. Could play a role in a specific type of protein O-glycosylation indirectly regulating macrophages migration and tissue invasion. Also essential for liver homeostasis. In Danio rerio (Zebrafish), this protein is Lysosomal dipeptide transporter MFSD1 (mfsd1).